The primary structure comprises 715 residues: Polyribonucleotide nucleotidyltransferase (715 aa).

Aspartate 497 and aspartate 503 together coordinate Mg(2+). The region spanning 564–623 is the KH domain; that stretch reads PRLLTMKIDPEQIGLVIGPGGKTIKSITEQTGSKIDIADDGTVTIAAIQAKKAERARDLI. Residues 633-701 form the S1 motif domain; the sequence is GEVYLGRVTR…NKGRLNLTRL (69 aa).

It belongs to the polyribonucleotide nucleotidyltransferase family. Requires Mg(2+) as cofactor.

Its subcellular location is the cytoplasm. The enzyme catalyses RNA(n+1) + phosphate = RNA(n) + a ribonucleoside 5'-diphosphate. Functionally, involved in mRNA degradation. Catalyzes the phosphorolysis of single-stranded polyribonucleotides processively in the 3'- to 5'-direction. In Crocosphaera subtropica (strain ATCC 51142 / BH68) (Cyanothece sp. (strain ATCC 51142)), this protein is Polyribonucleotide nucleotidyltransferase.